Reading from the N-terminus, the 134-residue chain is Large ribosomal subunit protein uL16c (134 aa).

Positions 1–22 (MLSPKRTRFRKQHRGRMKGISH) are disordered.

Belongs to the universal ribosomal protein uL16 family. As to quaternary structure, part of the 50S ribosomal subunit.

It localises to the plastid. It is found in the chloroplast. The polypeptide is Large ribosomal subunit protein uL16c (Nicotiana tabacum (Common tobacco)).